The chain runs to 302 residues: Small ribosomal subunit protein uS3 (302 aa).

The 70-residue stretch at 17–86 folds into the KH type-2 domain; it reads IDEFFAEELA…DPQIDVQEVE (70 aa). The interval 222–302 is disordered; it reads EDADAEDADA…EMDDEDGGAE (81 aa).

It belongs to the universal ribosomal protein uS3 family. Part of the 30S ribosomal subunit.

Its function is as follows. Binds the lower part of the 30S subunit head. The polypeptide is Small ribosomal subunit protein uS3 (Halobacterium salinarum (strain ATCC 700922 / JCM 11081 / NRC-1) (Halobacterium halobium)).